The primary structure comprises 911 residues: Eukaryotic translation initiation factor 3 subunit C (911 aa).

Residues 1–44 (MSRFFTTGSDSESESSLSGEELVTKPVSGNYGKQPLLLSEDEED) form a disordered region. The span at 8 to 21 (GSDSESESSLSGEE) shows a compositional bias: low complexity. Phosphoserine occurs at positions 9, 11, 13, 15, 16, 18, and 39. At Lys-99 the chain carries N6-acetyllysine. 2 disordered regions span residues 157-299 (TNYK…GGEW) and 520-540 (QLTP…NEGE). Residues Ser-166, Ser-178, Ser-181, and Ser-182 each carry the phosphoserine modification. The span at 166-190 (SADEDAEKNEEDSEGSSDEDEDEDG) shows a compositional bias: acidic residues. Over residues 199-208 (KKQESSGESR) the composition is skewed to basic and acidic residues. A compositionally biased stretch (acidic residues) spans 216 to 230 (DDDEDSEDSEDEEWD). Residues 259-276 (PTTEEDKKAAEKKREDKA) are compositionally biased toward basic and acidic residues. A compositionally biased stretch (polar residues) spans 520-529 (QLTPPEGSSK). Phosphothreonine is present on Thr-522. The residue at position 641 (Lys-641) is an N6-acetyllysine. The region spanning 671-847 (FHLHINLELL…QTVVMHRTEP (177 aa)) is the PCI domain. The segment at 883-911 (FRDQKDGYRKNEGYMRRGGYRQQQSQTAY) is disordered. Basic and acidic residues predominate over residues 884 to 897 (RDQKDGYRKNEGYM). Ser-907 is modified (phosphoserine).

The protein belongs to the eIF-3 subunit C family. Component of the eukaryotic translation initiation factor 3 (eIF-3) complex, which is composed of 13 subunits: EIF3A, EIF3B, EIF3C, EIF3D, EIF3E, EIF3F, EIF3G, EIF3H, EIF3I, EIF3J, EIF3K, EIF3L and EIF3M. The eIF-3 complex appears to include 3 stable modules: module A is composed of EIF3A, EIF3B, EIF3G and EIF3I; module B is composed of EIF3F, EIF3H, and EIF3M; and module C is composed of EIF3C, EIF3D, EIF3E, EIF3K and EIF3L. EIF3C of module C binds EIF3B of module A and EIF3H of module B, thereby linking the three modules. EIF3J is a labile subunit that binds to the eIF-3 complex via EIF3B. The eIF-3 complex may interact with RPS6KB1 under conditions of nutrient depletion. Mitogenic stimulation may lead to binding and activation of a complex composed of MTOR and RPTOR, leading to phosphorylation and release of RPS6KB1 and binding of EIF4B to eIF-3. Interacts with ALKBH4, IFIT1 and IFIT2. Interacts with BZW2/5MP1. In terms of processing, phosphorylated. Phosphorylation is enhanced upon serum stimulation.

It is found in the cytoplasm. Its function is as follows. Component of the eukaryotic translation initiation factor 3 (eIF-3) complex, which is required for several steps in the initiation of protein synthesis. The eIF-3 complex associates with the 40S ribosome and facilitates the recruitment of eIF-1, eIF-1A, eIF-2:GTP:methionyl-tRNAi and eIF-5 to form the 43S pre-initiation complex (43S PIC). The eIF-3 complex stimulates mRNA recruitment to the 43S PIC and scanning of the mRNA for AUG recognition. The eIF-3 complex is also required for disassembly and recycling of post-termination ribosomal complexes and subsequently prevents premature joining of the 40S and 60S ribosomal subunits prior to initiation. The eIF-3 complex specifically targets and initiates translation of a subset of mRNAs involved in cell proliferation, including cell cycling, differentiation and apoptosis, and uses different modes of RNA stem-loop binding to exert either translational activation or repression. This is Eukaryotic translation initiation factor 3 subunit C (Eif3c) from Mus musculus (Mouse).